The sequence spans 445 residues: Phosphoglucosamine mutase (445 aa).

Serine 102 functions as the Phosphoserine intermediate in the catalytic mechanism. Mg(2+) contacts are provided by serine 102, aspartate 241, aspartate 243, and aspartate 245. Serine 102 is subject to Phosphoserine.

It belongs to the phosphohexose mutase family. Requires Mg(2+) as cofactor. In terms of processing, activated by phosphorylation.

It catalyses the reaction alpha-D-glucosamine 1-phosphate = D-glucosamine 6-phosphate. In terms of biological role, catalyzes the conversion of glucosamine-6-phosphate to glucosamine-1-phosphate. The sequence is that of Phosphoglucosamine mutase from Acinetobacter baumannii (strain SDF).